The following is a 294-amino-acid chain: Mating type protein mtA-1 (294 aa).

Positions 46–101 form a DNA-binding region, alpha box; the sequence is TAKKKVNGFMGFRSNYSPLFSYLPQKMRSPFMTILWQYDPYHNEWDFMCSVYSSIR.

The protein belongs to the MATALPHA1 family.

It localises to the nucleus. Functionally, mating type proteins are sequence specific DNA-binding proteins that act as master switches in fungal differentiation by controlling gene expression in a cell type-specific fashion. Transcriptional activator that induces the transcription of alpha-specific genes. In Sordaria equina, this protein is Mating type protein mtA-1 (MTA1).